Here is a 327-residue protein sequence, read N- to C-terminus: Ribosomal RNA small subunit methyltransferase H (327 aa).

Residues 41–43, Asp60, Tyr87, Asp108, and Gln115 each bind S-adenosyl-L-methionine; that span reads GGH. Positions 292 to 327 are disordered; it reads AERADEQETLENPRAASARLRAVERLRETTTPGSAR.

Belongs to the methyltransferase superfamily. RsmH family.

The protein localises to the cytoplasm. The enzyme catalyses cytidine(1402) in 16S rRNA + S-adenosyl-L-methionine = N(4)-methylcytidine(1402) in 16S rRNA + S-adenosyl-L-homocysteine + H(+). Functionally, specifically methylates the N4 position of cytidine in position 1402 (C1402) of 16S rRNA. The sequence is that of Ribosomal RNA small subunit methyltransferase H from Kocuria rhizophila (strain ATCC 9341 / DSM 348 / NBRC 103217 / DC2201).